A 405-amino-acid chain; its full sequence is mRNA cap guanine-N(7) methyltransferase (405 aa).

The segment at 1–78 is disordered; the sequence is MDNILNPEDN…PRLEEGHGSL (78 aa). Composition is skewed to polar residues over residues 9-18 and 36-45; these read DNVSQTNTET and KFTASGQNLD. Positions 58 to 75 are enriched in basic and acidic residues; the sequence is KAGEPESPSKRPRLEEGH. The 308-residue stretch at 97-404 folds into the mRNA cap 0 methyltransferase domain; sequence SRIFHLRNFN…IYLLFAFEKQ (308 aa). 106 to 107 serves as a coordination point for mRNA; that stretch reads NN. The S-adenosyl-L-methionine site is built by Lys-110, Gly-134, Asp-156, Asp-190, Gln-213, and Tyr-218.

This sequence belongs to the class I-like SAM-binding methyltransferase superfamily. mRNA cap 0 methyltransferase family.

The protein localises to the nucleus. It catalyses the reaction a 5'-end (5'-triphosphoguanosine)-ribonucleoside in mRNA + S-adenosyl-L-methionine = a 5'-end (N(7)-methyl 5'-triphosphoguanosine)-ribonucleoside in mRNA + S-adenosyl-L-homocysteine. In terms of biological role, catalytic subunit of the mRNA-capping methyltransferase RNMT:RAMAC complex that methylates the N7 position of the added guanosine to the 5'-cap structure of mRNAs. Binds RNA containing 5'-terminal GpppC. The protein is mRNA cap guanine-N(7) methyltransferase (rnmt) of Xenopus tropicalis (Western clawed frog).